We begin with the raw amino-acid sequence, 406 residues long: MSAPKKVVLAYSGGLDTSIILKWLQTEYDCEVVTFTADLGQGEELEPARAKAEMMGASAIYIEDLREEFVRDFVFPMFRANAVYEGLYLLGTSIARPLISKRLVEIAEAEGADAVAHGATGKGNDQVRFELAAYALNPDIKVIAPWREWDLSSRTKLIDFAEKHQIPIAKDKRGEAPFSVDANLLHTSSEGKVLEDPAEDAPDYVYQRTVNPEDAPNTPEYIEVGFERGDAVSINGEAMSPATVLTKLNELGGAHGIGRLDLVEGRFVGMKSRGIYETPGGTILLEAHRGIEQITLDRGAAHLKDELMPRYAELIYNGFWFSPEREMLQAAIDASQAHVTGTVRLKLYKGSVRTVGRWSDHSLYSEAHVTFEDDAGAYDQKDAAGFIQLNALRLKLLAARNKRLGK.

Residues 10–18 (AYSGGLDTS) and Ala-37 contribute to the ATP site. L-citrulline contacts are provided by Tyr-88 and Ser-93. An ATP-binding site is contributed by Gly-118. The L-aspartate site is built by Thr-120, Asn-124, and Asp-125. L-citrulline is bound at residue Asn-124. L-citrulline is bound by residues Arg-128, Ser-179, Ser-188, Glu-264, and Tyr-276.

The protein belongs to the argininosuccinate synthase family. Type 1 subfamily. Homotetramer.

It localises to the cytoplasm. It carries out the reaction L-citrulline + L-aspartate + ATP = 2-(N(omega)-L-arginino)succinate + AMP + diphosphate + H(+). The protein operates within amino-acid biosynthesis; L-arginine biosynthesis; L-arginine from L-ornithine and carbamoyl phosphate: step 2/3. This Dinoroseobacter shibae (strain DSM 16493 / NCIMB 14021 / DFL 12) protein is Argininosuccinate synthase.